A 296-amino-acid polypeptide reads, in one-letter code: L-isoleucine 3(1)-dioxygenase (296 aa).

Residues histidine 176, aspartate 178, and histidine 267 each contribute to the Fe cation site.

It belongs to the iron/ascorbate-dependent oxidoreductase family. It depends on L-ascorbate as a cofactor. The cofactor is Fe(2+).

The catalysed reaction is L-isoleucine + 2-oxoglutarate + O2 = 3(1)-hydroxy-L-isoleucine + succinate + CO2. In terms of biological role, catalyzes the hydroxylation of L-isoleucine at the C-4' position to form L-4'-hydroxyisoleucine (4'-HIL). Exhibits low activity with L-valine and L-methionine. The sequence is that of L-isoleucine 3(1)-dioxygenase from Pantoea ananatis (strain AJ13355).